Consider the following 256-residue polypeptide: Expansin-like B1 (256 aa).

The N-terminal stretch at 1-24 (MAQLLRRHLPVILSLILFLSKATA) is a signal peptide. Asn27 carries an N-linked (GlcNAc...) asparagine glycan. Positions 46-150 (NGACEYGAFG…RRVSCTYPNK (105 aa)) constitute an Expansin-like EG45 domain. The 86-residue stretch at 164–249 (NYLEFEIWYQ…NWTAGATYDS (86 aa)) folds into the Expansin-like CBD domain. Asn189 and Asn240 each carry an N-linked (GlcNAc...) asparagine glycan.

The protein belongs to the expansin family. Expansin-like B subfamily.

It localises to the secreted. This is Expansin-like B1 (EXLB1) from Oryza sativa subsp. japonica (Rice).